Reading from the N-terminus, the 104-residue chain is L-rhamnose mutarotase (104 aa).

Position 18 (tyrosine 18) interacts with substrate. Histidine 22 acts as the Proton donor in catalysis. Substrate-binding positions include tyrosine 41 and 76–77 (WW).

Belongs to the rhamnose mutarotase family. Homodimer.

The protein localises to the cytoplasm. The catalysed reaction is alpha-L-rhamnose = beta-L-rhamnose. Its pathway is carbohydrate metabolism; L-rhamnose metabolism. In terms of biological role, involved in the anomeric conversion of L-rhamnose. This Clostridium beijerinckii (strain ATCC 51743 / NCIMB 8052) (Clostridium acetobutylicum) protein is L-rhamnose mutarotase.